A 304-amino-acid polypeptide reads, in one-letter code: tRNA pseudouridine synthase B (304 aa).

The active-site Nucleophile is Asp-38.

It belongs to the pseudouridine synthase TruB family. Type 1 subfamily.

The catalysed reaction is uridine(55) in tRNA = pseudouridine(55) in tRNA. In terms of biological role, responsible for synthesis of pseudouridine from uracil-55 in the psi GC loop of transfer RNAs. The chain is tRNA pseudouridine synthase B from Listeria innocua serovar 6a (strain ATCC BAA-680 / CLIP 11262).